The primary structure comprises 281 residues: MELIIISGRSGSGKSVALRVVEDLGYYCVDNIPVNLLPSLVRSVSDNYDKIAVSIDVRNLPKDQQQFNDILEYLPDFAKPTLFYLDSDDQTLIRRYSETRRLHPLSIDSLPLDLAIKKEKELLDVLVTRADHVIDTTDLSVHQLAESMRETILGKKDKQLIITFESFGFKHGIPKGADYVFDARFLPNPHWEPELKPLTGLDQPVKDYLASHSIVQKFTWQIQTFVQTWLPHLERNNRSYLTIAIGCTGGQHRSVYLAQTIGESFAMSHPNVKIRHREQEK.

8–15 is a binding site for ATP; the sequence is GRSGSGKS. 56–59 is a GTP binding site; sequence DVRN.

It belongs to the RapZ-like family.

Functionally, displays ATPase and GTPase activities. The chain is Nucleotide-binding protein PSHAa2554 from Pseudoalteromonas translucida (strain TAC 125).